Consider the following 193-residue polypeptide: Protein PATRONUS 1 (193 aa).

Residues 14 to 16 carry the DEN-box motif; sequence DEN. Positions 46 to 49 match the D-box motif; that stretch reads RKAL.

As to quaternary structure, interacts directly with the anaphase promoting complex/cyclosome (APC/C) through the CDC27B and CDC20-1 subunits. Expressed in somatic and reproductive tissues. Expressed in inflorescence, young buds, roots and basal portion of young leaves. Expressed in proliferating cells such as apical meristems of roots and shoots, expanding cotyledons and leaves, root vascular tissues, and in stomatal precursor cells.

It localises to the nucleus. The protein localises to the cytoplasm. Its function is as follows. Required for the maintenance of centromeric cohesion during interkinesis, until meiosis II. Required for regular configuration and segregation of sister chromatids in meiosis II. Also required for centromere cohesion during meiosis I. Involved in spindle organization at the end of telophase I and in meiosis II. Required to prevent precocious release of pericentromeric cohesins during meiosis, but not for cohesion establishment and monopolar orientation of kinetochores at meiosis I. Involved also in somatic development. Regulates mitotic cell division and ploidy stability in somatic cell types. May be involved in the organization of microtubules dynamics. Involved in abiotic stresses and mono- or divalent ions tolerance and may play a role in maintaining meristematic activity under saline conditions. PANS1 and GIG1 are part of a network linking centromere cohesion and cell cycle progression through control of APC/C activity. Regulates the number of dividing cells in root meristem and is necessary for the anaphase onset control through an APC/C-mediated pathway. Involved in maintaining correct chromosome arm cohesion under stress conditions. In Arabidopsis thaliana (Mouse-ear cress), this protein is Protein PATRONUS 1.